We begin with the raw amino-acid sequence, 293 residues long: Movement protein BC1 (293 aa).

This sequence belongs to the begomovirus movement protein BC1 family. In terms of assembly, binds to dimeric supercoiled plasmid DNA. Phosphorylated.

Its subcellular location is the host cell membrane. The protein resides in the host microsome membrane. The protein localises to the host endoplasmic reticulum membrane. Transports viral genome to neighboring plant cells directly through plasmosdesmata, without any budding. The movement protein allows efficient cell to cell propagation, by bypassing the host cell wall barrier. Begomovirus genome is shuttled out of nucleus by Nuclear shuttle protein (NSP) and the movement protein transports the DNA-NSP complex to cell plasmodesmata and facilitates further movement across the cell wall. The sequence is that of Movement protein BC1 from Potato yellow mosaic virus (isolate Venezuela) (PYMV).